The chain runs to 209 residues: Protein GrpE (209 aa).

The interval 1–63 is disordered; that stretch reads MKKSRKKENM…NPEEACREEN (63 aa). Composition is skewed to basic and acidic residues over residues 7-42 and 50-63; these read KENM…KVSP and EAEK…REEN.

It belongs to the GrpE family. In terms of assembly, homodimer.

It localises to the cytoplasm. Its function is as follows. Participates actively in the response to hyperosmotic and heat shock by preventing the aggregation of stress-denatured proteins, in association with DnaK and GrpE. It is the nucleotide exchange factor for DnaK and may function as a thermosensor. Unfolded proteins bind initially to DnaJ; upon interaction with the DnaJ-bound protein, DnaK hydrolyzes its bound ATP, resulting in the formation of a stable complex. GrpE releases ADP from DnaK; ATP binding to DnaK triggers the release of the substrate protein, thus completing the reaction cycle. Several rounds of ATP-dependent interactions between DnaJ, DnaK and GrpE are required for fully efficient folding. This is Protein GrpE from Methanosarcina mazei (strain ATCC BAA-159 / DSM 3647 / Goe1 / Go1 / JCM 11833 / OCM 88) (Methanosarcina frisia).